The sequence spans 457 residues: tRNA-2-methylthio-N(6)-dimethylallyladenosine synthase (457 aa).

Residues 4-119 (RNFHIITFGC…APDAIERLYA (116 aa)) enclose the MTTase N-terminal domain. C13, C48, C82, C164, C168, and C171 together coordinate [4Fe-4S] cluster. In terms of domain architecture, Radical SAM core spans 150-385 (NTLALMAYVN…QATQLEHSTS (236 aa)). A TRAM domain is found at 388 to 456 (KSRVGVETTV…KHSLVAEPLI (69 aa)).

The protein belongs to the methylthiotransferase family. MiaB subfamily. In terms of assembly, monomer. [4Fe-4S] cluster is required as a cofactor.

The protein localises to the cytoplasm. It catalyses the reaction N(6)-dimethylallyladenosine(37) in tRNA + (sulfur carrier)-SH + AH2 + 2 S-adenosyl-L-methionine = 2-methylsulfanyl-N(6)-dimethylallyladenosine(37) in tRNA + (sulfur carrier)-H + 5'-deoxyadenosine + L-methionine + A + S-adenosyl-L-homocysteine + 2 H(+). Its function is as follows. Catalyzes the methylthiolation of N6-(dimethylallyl)adenosine (i(6)A), leading to the formation of 2-methylthio-N6-(dimethylallyl)adenosine (ms(2)i(6)A) at position 37 in tRNAs that read codons beginning with uridine. This Lawsonia intracellularis (strain PHE/MN1-00) protein is tRNA-2-methylthio-N(6)-dimethylallyladenosine synthase.